A 1004-amino-acid polypeptide reads, in one-letter code: MAQLVDEIVFQSGVKLHNRIVMAPMTIQSAFFDGGVTQEMINYYAARSGGAGAIIVESAFVENYGRAFPGALGIDTDSKIAGLTKLADAIKAKGSKAILQIYHAGRMANPEFNGGHQPISASPVAALRDNAETPLEMTKEQIEEMIERFGDAVNRAILAGFDGVEIHGANTYLIQQFFSPHSNRRNDKWGGNIERRTSFPLAVLAKTKQVAEQHNKSDFIIGYRFSPEEIEQPGIRFDDTMFLLDKLATHGLDYFHFSMGSWLRNSIVTPEDQEPLIDKYRKLQSESVAKVPVIGVGGIAQRKDAENALEQGYDMVSVGKGYLVEPTWANKALNDETCAEFADIAQQEALQIPTPLWEIMDYMIVDSAAEALKHQRIKELQNVPIKFNSGEYTAYGRGHNGDLPVTVTFSEDKILDIVVDSSKESDGIANPAFERIPQQILDGQTLNIDVISGATVSSQAVLDGVSNAVDLAGGNSEALRCKAKEAVAWSSKTIEETVDIVVVGGGGAGLSATLTALDKGKSVVLLEKFPAIGGNTVRTGGWVNAAEPKWQGDFPALPGEKETLMLLAKTAESEFSGEYLEDFKVLKAQLDGYFTDLENGKQYLFDSVELHRIQTYLGGKRTDLNGESIYGQYDLVETLTSRSMESIDWLSEKGIDFDRSVVEIPVGALWRRAHKPKRPKGVEFIDKLSKRIQEQNGRIITDTRATDLMVDNGKVVGIKAVQADGTELILHVNHGVVLASGGFGANTQMIKKYNTYWKEIADDIKTTNSPALVGDGIEIGEKAGAELVGMGFVQLMPVGDPKSGALLTGLIVPPENFVFVNKQGKRFVDECGSRDVLSEAFFDNGGLIYMIADENIRQTAANTSDETIEREIKEGIIIQADTLEELAEKIGVPTQELTNTIAQYNACVDAGQDPEFHKSAFGLKVEKAPFYATPRQPSVHHTMGGLKIDTKARVIGKDGEVIQGLYAAGEVTGGIHAGNRLGGNALIDIFTYGRIAGESASDLV.

FMN phosphoryl threonine is present on threonine 455. FAD contacts are provided by alanine 508, glutamate 527, asparagine 535, threonine 536, glycine 540, glycine 541, and aspartate 775. The active-site Proton donor is arginine 834. Positions 941, 970, 985, and 986 each coordinate FAD.

It belongs to the FAD-dependent oxidoreductase 2 family. FRD/SDH subfamily. FAD serves as cofactor. FMN is required as a cofactor. Is flavinylated on Thr-455 by ApbE, encoded in a neighboring gene. Flavinylation is essential for catalytic activity.

The enzyme catalyses acrylate + NADH + H(+) = propanoate + NAD(+). Catalyzes the NADH-dependent reduction of acrylate to propanoate. The principal role of ARD in Vibrio seems to be the energy-saving detoxification of acrylate coming from the environment. May also use acrylate as the terminal electron acceptor for NADH regeneration at oxygen deficiency. NADPH cannot replace NADH as the electron donor. Is also able to reduce methacrylate in vitro, but with a much lower efficiency. The chain is NADH:acrylate oxidoreductase from Vibrio harveyi (Beneckea harveyi).